Reading from the N-terminus, the 202-residue chain is B-cell CLL/lymphoma 7 protein family member B (202 aa).

Residues 53 to 202 (DSKEKEKSKS…PAVPQTASES (150 aa)) form a disordered region. Positions 90–99 (ENSNQSSVSD) are enriched in polar residues. Residues 107–123 (SSTNSSPSPQQSESLSP) show a composition bias toward low complexity. 7 positions are modified to phosphoserine: serine 114, serine 118, serine 120, serine 122, serine 127, serine 148, and serine 152.

The protein belongs to the BCL7 family.

Functionally, positive regulator of apoptosis. Plays a role in the Wnt signaling pathway, negatively regulating the expression of Wnt signaling components CTNNB1 and HMGA1. Involved in cell cycle progression, maintenance of the nuclear structure and stem cell differentiation. May play a role in lung tumor development or progression. The protein is B-cell CLL/lymphoma 7 protein family member B (BCL7B) of Bos taurus (Bovine).